Here is a 1183-residue protein sequence, read N- to C-terminus: PAN2-PAN3 deadenylation complex catalytic subunit PAN2 (1183 aa).

The segment at 1–24 (MDGWTEISRIAATTQPPKGPSPHI) is disordered. 3 WD repeats span residues 159–207 (DLNK…SIKS), 269–309 (PFPA…NVFL), and 327–366 (SKAPFMTNLEISENGDFFAFSDSYATMHLWTLNNSGSTIT). Positions 369 to 520 (FVNFPASIEQ…FQYKVPLSRK (152 aa)) are linker. The 399-residue stretch at 521–919 (KIPNCYSRLQ…KPVILVYHDS (399 aa)) folds into the USP domain. One can recognise an Exonuclease domain in the interval 977-1151 (IAIDAEFVNL…EDAYTALLLY (175 aa)). Positions 980, 982, 1090, and 1143 each coordinate a divalent metal cation.

It belongs to the peptidase C19 family. PAN2 subfamily. Forms a heterotrimer with an asymmetric homodimer of the regulatory subunit PAN3 to form the poly(A)-nuclease (PAN) deadenylation complex. It depends on a divalent metal cation as a cofactor.

Its subcellular location is the cytoplasm. The catalysed reaction is Exonucleolytic cleavage of poly(A) to 5'-AMP.. With respect to regulation, positively regulated by the regulatory subunit PAN3. Catalytic subunit of the poly(A)-nuclease (PAN) deadenylation complex, one of two cytoplasmic mRNA deadenylases involved in mRNA turnover. PAN specifically shortens poly(A) tails of RNA and the activity is stimulated by poly(A)-binding protein PAB1. PAN deadenylation is followed by rapid degradation of the shortened mRNA tails by the CCR4-NOT complex. Deadenylated mRNAs are then degraded by two alternative mechanisms, namely exosome-mediated 3'-5' exonucleolytic degradation, or deadenylation-dependent mRNA decaping and subsequent 5'-3' exonucleolytic degradation by XRN1. May also be involved in post-transcriptional maturation of mRNA poly(A) tails. This chain is PAN2-PAN3 deadenylation complex catalytic subunit PAN2, found in Scheffersomyces stipitis (strain ATCC 58785 / CBS 6054 / NBRC 10063 / NRRL Y-11545) (Yeast).